Consider the following 432-residue polypeptide: MGVSLKKLEKSVATIELTIPSEKFEEGLNFAFKKNASKFNVPGFRRGKAPRVIVERYYGEGVLYEDAVEYVFDEAYKEALKTFNLEPVDYPDINILQIGKGKDLILEATVPVMPEVELGEYKGIEIEKIEYNVYDGDVEYELEKLRQQNARIVPVEGRPAESGDIAVIDFEGFIDGKPFEGGKAENYELELGSNTFIPGFEDQIIGHNVNETFDVNITFPEDYRVEELRGKSAVFKVTLKALNKKELPELDDEFAKDVSEFETLDELKADIRKKLEEKNRVEAENEMKEKAVMKVVENAKVDIPDVMVERQIDISLRDLDYNLRYQGLDLNSYLSITGKTLENLRKEMWDGALNRVKTQLVIDKIAKVENIEVTEEELENKLKEMAANYRINLEEFKKSLTESQINSIKEDIAYYKTIDFIFSKCKIISKEE.

The PPIase FKBP-type domain occupies 163–248 (GDIAVIDFEG…LKALNKKELP (86 aa)).

The protein belongs to the FKBP-type PPIase family. Tig subfamily.

The protein resides in the cytoplasm. The catalysed reaction is [protein]-peptidylproline (omega=180) = [protein]-peptidylproline (omega=0). Functionally, involved in protein export. Acts as a chaperone by maintaining the newly synthesized protein in an open conformation. Functions as a peptidyl-prolyl cis-trans isomerase. The chain is Trigger factor from Thermoanaerobacter pseudethanolicus (strain ATCC 33223 / 39E) (Clostridium thermohydrosulfuricum).